We begin with the raw amino-acid sequence, 169 residues long: MKQQLLLLEDVDGLGRSGDLITARPGYVRNYLIPKKKAVIAGAGTLRLQAKLKEQRLIQAAADKADSERIAQALKDIVLEFQVRVDPDNNMYGSVTIADIIAEAAKKNIFLVRKNFPHAHYAIKNLGKKNIPLKLKEEVTATLLVEVTSDNEYVTVLAQGKQTEENQEG.

It belongs to the bacterial ribosomal protein bL9 family.

Binds to the 23S rRNA. The chain is Large ribosomal subunit protein bL9 from Chlamydia pneumoniae (Chlamydophila pneumoniae).